Here is a 143-residue protein sequence, read N- to C-terminus: Ribonuclease H (143 aa).

One can recognise an RNase H type-1 domain in the interval 1 to 140 (MKVEIYTDGA…VDALANLGIE (140 aa)). 4 residues coordinate Mg(2+): Asp8, Glu46, Asp68, and Asp132.

This sequence belongs to the RNase H family. Monomer. It depends on Mg(2+) as a cofactor.

The protein resides in the cytoplasm. The enzyme catalyses Endonucleolytic cleavage to 5'-phosphomonoester.. In terms of biological role, endonuclease that specifically degrades the RNA of RNA-DNA hybrids. The sequence is that of Ribonuclease H from Legionella pneumophila (strain Lens).